The following is a 583-amino-acid chain: Threonine--tRNA ligase (583 aa).

The interval 185 to 478 (DHRKLGRELN…LVEHYGGAFP (294 aa)) is catalytic. Positions 278, 329, and 455 each coordinate Zn(2+).

The protein belongs to the class-II aminoacyl-tRNA synthetase family. Homodimer. Zn(2+) is required as a cofactor.

It localises to the cytoplasm. It catalyses the reaction tRNA(Thr) + L-threonine + ATP = L-threonyl-tRNA(Thr) + AMP + diphosphate + H(+). Functionally, catalyzes the attachment of threonine to tRNA(Thr) in a two-step reaction: L-threonine is first activated by ATP to form Thr-AMP and then transferred to the acceptor end of tRNA(Thr). Also edits incorrectly charged L-seryl-tRNA(Thr). In Borrelia duttonii (strain Ly), this protein is Threonine--tRNA ligase.